A 410-amino-acid chain; its full sequence is Tyrosine--tRNA ligase (410 aa).

Tyr-36 contacts L-tyrosine. Residues 41 to 50 (ATADSLTAGH) carry the 'HIGH' region motif. L-tyrosine is bound by residues Tyr-169 and Gln-173. Residues 229–233 (KMGKT) carry the 'KMSKS' region motif. An ATP-binding site is contributed by Lys-232. The S4 RNA-binding domain maps to 343-409 (IDLITMMIDA…GKKAYHLFRA (67 aa)).

Belongs to the class-I aminoacyl-tRNA synthetase family. TyrS type 1 subfamily. As to quaternary structure, homodimer.

It is found in the cytoplasm. The catalysed reaction is tRNA(Tyr) + L-tyrosine + ATP = L-tyrosyl-tRNA(Tyr) + AMP + diphosphate + H(+). Functionally, catalyzes the attachment of tyrosine to tRNA(Tyr) in a two-step reaction: tyrosine is first activated by ATP to form Tyr-AMP and then transferred to the acceptor end of tRNA(Tyr). In Lachnoclostridium phytofermentans (strain ATCC 700394 / DSM 18823 / ISDg) (Clostridium phytofermentans), this protein is Tyrosine--tRNA ligase.